The primary structure comprises 166 residues: Small ribosomal subunit protein uS5 (166 aa).

One can recognise an S5 DRBM domain in the interval 11-74 (LQEKLVAVNR…EQARRNMVKV (64 aa)).

Belongs to the universal ribosomal protein uS5 family. As to quaternary structure, part of the 30S ribosomal subunit. Contacts proteins S4 and S8.

Its function is as follows. With S4 and S12 plays an important role in translational accuracy. In terms of biological role, located at the back of the 30S subunit body where it stabilizes the conformation of the head with respect to the body. This Tolumonas auensis (strain DSM 9187 / NBRC 110442 / TA 4) protein is Small ribosomal subunit protein uS5.